The sequence spans 125 residues: MIYGIGTDLVDPARIAGSLERYGERFARRVLADSEWSEYVRQTRPEVFLAKRFAAKEAFSKAVGTGLRTPVMFGNIAVQHDTQGKPYFEFHQELIDWIGQRGIVSHHLSISDELTLASAFVVLEK.

2 residues coordinate Mg(2+): Asp-8 and Glu-57.

This sequence belongs to the P-Pant transferase superfamily. AcpS family. Mg(2+) is required as a cofactor.

Its subcellular location is the cytoplasm. The enzyme catalyses apo-[ACP] + CoA = holo-[ACP] + adenosine 3',5'-bisphosphate + H(+). In terms of biological role, transfers the 4'-phosphopantetheine moiety from coenzyme A to a Ser of acyl-carrier-protein. The protein is Holo-[acyl-carrier-protein] synthase of Nitrosomonas eutropha (strain DSM 101675 / C91 / Nm57).